A 333-amino-acid polypeptide reads, in one-letter code: Sphingomyelinase C (333 aa).

The signal sequence occupies residues 1-26 (MKGKLLKGVLSLGVGLGALYSGTSAQ). C150 and C186 are oxidised to a cystine.

It belongs to the neutral sphingomyelinase family. Requires Mg(2+) as cofactor. Post-translationally, the N-terminus is blocked.

Its subcellular location is the secreted. The enzyme catalyses a sphingomyelin + H2O = phosphocholine + an N-acylsphing-4-enine + H(+). With respect to regulation, activated by cobalt and manganese ions. Its function is as follows. Required, with sphingomyelinase, to effect target cell lysis (hemolysis). In Bacillus cereus, this protein is Sphingomyelinase C (cerB).